The sequence spans 287 residues: Complement C1q-like protein 2 (287 aa).

The signal sequence occupies residues 1–21 (MALGLLIAVPLLLQAAPPGAA). The disordered stretch occupies residues 65–144 (LSANPPPPFI…GTGGGGDTEG (80 aa)). Residues 76–118 (GPKGDPGRPGKPGPRGPPGEPGPPGPRGPPGEKGDSGRPGLPG) form the Collagen-like domain. The span at 84-104 (PGKPGPRGPPGEPGPPGPRGP) shows a compositional bias: pro residues. Over residues 127–141 (GGVGVVSGGTGGGGD) the composition is skewed to gly residues. One can recognise a C1q domain in the interval 154–287 (FSGPKIAFYV…TFSGFLLYPD (134 aa)).

Forms homotrimers which can further assemble to form higher-order oligomeric complexes. Interacts with ADGRB3. May interact with ERFE. Forms heterooligomers with C1QL3 and C1QL4, when proteins are coexpressed; this interaction does not occur after secretion. Post-translationally, glycosylated, but not with N-linked glycans. As to expression, highest expression in eye, followed by placenta and brain, intermediate expression in adipose tissue and lowest expression in lymph node and testis.

It is found in the secreted. In terms of biological role, may regulate the number of excitatory synapses that are formed on hippocampus neurons. Has no effect on inhibitory synapses. The polypeptide is Complement C1q-like protein 2 (C1ql2) (Mus musculus (Mouse)).